The primary structure comprises 649 residues: UvrABC system protein B (649 aa).

The region spanning 25-178 (EHYKDGIKEQ…EDILKELVKM (154 aa)) is the Helicase ATP-binding domain. 38–45 (GVTGSGKT) serves as a coordination point for ATP. A Beta-hairpin motif is present at residues 91-114 (YYDYYQPEAYVAQTDTFIDKESAI). The Helicase C-terminal domain maps to 428-594 (QVDDLLGEIR…SVVRKLKDKK (167 aa)). The UVR domain occupies 614-649 (DEIIKELEKEMKQAAKDLNFEKAAKLRDRIMELKEE).

This sequence belongs to the UvrB family. As to quaternary structure, forms a heterotetramer with UvrA during the search for lesions. Interacts with UvrC in an incision complex.

The protein resides in the cytoplasm. Functionally, the UvrABC repair system catalyzes the recognition and processing of DNA lesions. A damage recognition complex composed of 2 UvrA and 2 UvrB subunits scans DNA for abnormalities. Upon binding of the UvrA(2)B(2) complex to a putative damaged site, the DNA wraps around one UvrB monomer. DNA wrap is dependent on ATP binding by UvrB and probably causes local melting of the DNA helix, facilitating insertion of UvrB beta-hairpin between the DNA strands. Then UvrB probes one DNA strand for the presence of a lesion. If a lesion is found the UvrA subunits dissociate and the UvrB-DNA preincision complex is formed. This complex is subsequently bound by UvrC and the second UvrB is released. If no lesion is found, the DNA wraps around the other UvrB subunit that will check the other stand for damage. This Methanosphaera stadtmanae (strain ATCC 43021 / DSM 3091 / JCM 11832 / MCB-3) protein is UvrABC system protein B.